The sequence spans 319 residues: Serpentine receptor class X-43 (319 aa).

7 consecutive transmembrane segments (helical) span residues V28 to F48, A67 to I87, Y95 to M115, I138 to V158, F164 to L184, T194 to F214, and F267 to F287.

Belongs to the G-protein coupled receptor 1 family. Expressed in ASI sensory neurons.

Its subcellular location is the cell membrane. The protein resides in the perikaryon. It localises to the cell projection. The protein localises to the cilium. In terms of biological role, receptor for the ascaroside pheromone icas#9 which suppresses exploratory forgaging behavior. In response to ascaroside icas#9, may furthermore play a role in the expression of genes in the TGF-beta signaling pathway, such as daf-7, and in insulin signaling pathway, such as daf-28, which may in turn contribute to exploratory behavior. The protein is Serpentine receptor class X-43 of Caenorhabditis elegans.